The primary structure comprises 216 residues: Probable Golgi SNAP receptor complex member 2 (216 aa).

Over 1 to 194 (MESLYHQTNN…IERRLVEDRR (194 aa)) the chain is Cytoplasmic. A coiled-coil region spans residues 62–103 (QRQSSKLRVDQLKYDLRHLQTSLQTARERRQRRMQEISEREQ). The helical; Anchor for type IV membrane protein transmembrane segment at 195-215 (IFIGGVVVTLLIIALIIYFLV) threads the bilayer. Position 216 (leucine 216) is a topological domain, vesicular.

The protein belongs to the GOSR2 family. Part of a unique SNARE complex.

The protein resides in the golgi apparatus. It localises to the cis-Golgi network membrane. The protein localises to the golgi apparatus membrane. It is found in the endoplasmic reticulum membrane. Its function is as follows. Involved in transport of proteins from the cis/medial-Golgi to the trans-Golgi network. This chain is Probable Golgi SNAP receptor complex member 2, found in Drosophila melanogaster (Fruit fly).